The sequence spans 45 residues: uncharacterized protein (45 aa).

This is an uncharacterized protein from Escherichia coli (Bacteriophage T4).